A 374-amino-acid chain; its full sequence is DNA replication and repair protein RecF (374 aa).

30-37 (GPNAQGKT) is a binding site for ATP.

This sequence belongs to the RecF family.

The protein resides in the cytoplasm. The RecF protein is involved in DNA metabolism; it is required for DNA replication and normal SOS inducibility. RecF binds preferentially to single-stranded, linear DNA. It also seems to bind ATP. In Lactobacillus gasseri (strain ATCC 33323 / DSM 20243 / BCRC 14619 / CIP 102991 / JCM 1131 / KCTC 3163 / NCIMB 11718 / NCTC 13722 / AM63), this protein is DNA replication and repair protein RecF.